The chain runs to 682 residues: Protein PilJ (682 aa).

The Cytoplasmic segment spans residues 1-14; the sequence is MKKINAGNLFAGMR. Residues 15–38 traverse the membrane as a helical segment; the sequence is SSSVIAGLFIVLIVSIVLLFANFA. Residues 39 to 306 are Periplasmic-facing; the sequence is YLNTQSNHDK…DGFENLAGGR (268 aa). The chain crosses the membrane as a helical span at residues 307-333; the sequence is SINLFAGYALGALALASIILIGLVMVR. Over 334–682 the chain is Cytoplasmic; sequence ETNRRLAETA…FKLPEGVEQA (349 aa). Residues 347-398 form the HAMP domain; it reads DRNQAAILRLLDEIADLADGDLTVAATVTEDFTGAIADSINYSIDQLRELVE. Positions 403-639 constitute a Methyl-accepting transducer domain; it reads TAVQVAAAAQ…HISNTMNVIQ (237 aa).

The protein belongs to the methyl-accepting chemotaxis (MCP) protein family.

It localises to the cell inner membrane. Functionally, may be a part of a signal-transduction system that regulates twitching motility by controlling pilus function (extension and retraction). This Pseudomonas aeruginosa (strain ATCC 15692 / DSM 22644 / CIP 104116 / JCM 14847 / LMG 12228 / 1C / PRS 101 / PAO1) protein is Protein PilJ (pilJ).